Reading from the N-terminus, the 3072-residue chain is Platelet binding protein GspB (3072 aa).

The first 85 residues, 1–85 (MFFKRQKGQY…AVLGGAVVTS (85 aa)), serve as a signal peptide directing secretion. Disordered stretches follow at residues 117–147 (EAAT…SASS), 182–254 (SESL…APNV), 876–909 (SAST…SVSA), 936–969 (SAST…SVSA), 1024–2085 (SASV…SVSA), 2106–2139 (SAST…SVSA), 2173–2223 (VSAS…SVSA), 2250–2595 (SAST…SVSA), 2625–2965 (TSAS…NASV), and 3014–3045 (SQSL…GESE). A compositionally biased stretch (polar residues) spans 118 to 127 (AATTLSSTEA). The tract at residues 123–236 (SSTEANPVES…SSQQSTEASS (114 aa)) is ser-rich region 1 (SSR1). Low complexity-rich tracts occupy residues 131-147 (ESLS…SASS) and 182-238 (SESL…SSQT). Positions 237–603 (QTGRRRTRRA…GSKFIDTRAG (367 aa)) are basic region (BR). The segment at 604–3028 (SISKSQSTSN…ESQSSSASQS (2425 aa)) is ser-rich region 2 (SSR2). Positions 3014-3028 (SQSLSESQSSSASQS) are enriched in low complexity. An LPXTG sorting signal motif is present at residues 3038-3042 (LPRTG). A Pentaglycyl murein peptidoglycan amidated threonine modification is found at Thr-3041. Positions 3042–3072 (GESENKASILALGLGALGLAFKKRKKNESED) are cleaved as a propeptide — removed by sortase.

It belongs to the serine-rich repeat protein (SRRP) family. In terms of assembly, both SSR domains in the unglycosylated protein bind to Asp2 and Asp3; glycosylated protein binds less well. Interacts with the human cell surface glycoprotein GP1BA. Proteolytically cleaved by a metalloprotease. In terms of processing, both SSR1 and SSR2 domains are glycosylated. A truncated derivative (residues 1-2062) contains 105 nmol per nmol of protein, suggesting at least 10% of the apparent molecular weight is due to carbohydrates. Glucose and N-acetylglucosamine are present in a ratio of 30:73 residues per truncated polypeptide, as well as minor amounts of galactose and N-acetylgalactosamine. Glycosylation occurs intracellularly in the Ser-rich regions SSR1 and SSR2. Glycosylation of SSR2 domain may be required to prevent aggregation of GspB. It is probable that most of the Ser residues in SSR1 and SSR2 are O-GlcNAcylated. Sequential glycosylation by sugar transferases are able to generate complex sugar polymorphisms.

The protein localises to the secreted. Its subcellular location is the cell wall. Plays a role in virulence and host-pathogen interactions. Mediates binding to human platelets via interaction with the human cell surface glycoprotein GP1BA. Plays a positive role in biofilm formation, possibly by self-association via the basic region (BR). The protein is Platelet binding protein GspB (gspB) of Streptococcus gordonii.